The primary structure comprises 451 residues: UPF0761 membrane protein Hhal_0704 (451 aa).

A run of 6 helical transmembrane segments spans residues 66–86 (LLAI…FPVF), 122–142 (ELTA…LNTI), 162–182 (FMVY…SVAS), 204–224 (LLNL…YSLV), 228–248 (SVPV…FELA), and 268–288 (ALAA…VILI).

Belongs to the UPF0761 family.

The protein resides in the cell inner membrane. The sequence is that of UPF0761 membrane protein Hhal_0704 from Halorhodospira halophila (strain DSM 244 / SL1) (Ectothiorhodospira halophila (strain DSM 244 / SL1)).